The chain runs to 309 residues: Fructosamine-3-kinase (309 aa).

M1 bears the N-acetylmethionine mark. 89 to 91 serves as a coordination point for ATP; the sequence is EHL. D217 functions as the Proton acceptor in the catalytic mechanism.

It belongs to the fructosamine kinase family. Monomer. In terms of tissue distribution, expressed in red blood cells, brain, heart, kidney and muscle. Lower expression is observed in liver. Not expressed in lung, spleen, testis and thymus.

It catalyses the reaction N(6)-(D-fructosyl)-L-lysyl-[protein] + ATP = N(6)-(3-O-phospho-D-fructosyl)-L-lysyl-[protein] + ADP + H(+). It carries out the reaction N(6)-D-ribulosyl-L-lysyl-[protein] + ATP = N(6)-(3-O-phospho-D-ribulosyl)-L-lysyl-[protein] + ADP + H(+). The enzyme catalyses N(6)-(D-psicosyl)-L-lysyl-[protein] + ATP = N(6)-(3-O-phospho-D-psicosyl)-L-lysyl-[protein] + ADP + H(+). Its function is as follows. Fructosamine-3-kinase involved in protein deglycation by mediating phosphorylation of fructoselysine residues on glycated proteins, to generate fructoselysine-3 phosphate. Fructoselysine-3 phosphate adducts are unstable and decompose under physiological conditions. Involved in intracellular deglycation in erythrocytes and pancreatic islets. Involved in the response to oxidative stress by mediating deglycation of NFE2L2/NRF2, glycation impairing NFE2L2/NRF2 function. Also able to phosphorylate psicosamines and ribulosamines. This is Fructosamine-3-kinase from Mus musculus (Mouse).